Reading from the N-terminus, the 460-residue chain is Piperamide synthase (460 aa).

Residues 1–23 (MASSQLEFNVERKQPELLGPAEP) form a disordered region. Catalysis depends on proton acceptor residues histidine 168 and aspartate 383. The short motif at 458–460 (SRM) is the Microbody targeting signal element.

Belongs to the plant acyltransferase family. Monomer. As to expression, confined to immature fruits perisperm. Also detectable in roots.

Its subcellular location is the cytoplasm. The enzyme catalyses piperidine + (E,E)-piperoyl-CoA = piperine + CoA + H(+). It functions in the pathway aromatic compound metabolism. In terms of biological role, involved in the biosynthesis of aromatic piperamides natural products such as piperine (1-piperoyl-piperidine), the pungent principle contributing, together with several terpenoids, to the aromatic properties of black pepper fruits, and displaying numerous pharmacological activities such as antiproliferative, antitumor, antiangiogenesis, antioxidant, antidiabetic, antiobesity, cardioprotective, antimicrobial, antiaging, and immunomodulatory effects. Can use piperidine and benzylamine as acceptors and various CoA-esters with aliphatic and aromatic amines as CoA-donors, including piperoyl-CoA, hexanoyl-CoA and octanoyl-CoA, and, to a lower extent, benzoyl-CoA. Mediates the conversion of piperidine to three piperine isomers in the presence of piperoyl-CoA. Its ability to convert in vitro piperidine to hexanoylpiperidine in the presence of hexanoyl-CoA, and to octanoylpiperidine in the presence of octanoyl-CoA is not confirmed in vivo according to fruits metabolome analysis. This is Piperamide synthase from Piper nigrum (Black pepper).